A 90-amino-acid chain; its full sequence is Probable Fe(2+)-trafficking protein (90 aa).

Belongs to the Fe(2+)-trafficking protein family. Monomer.

Functionally, could be a mediator in iron transactions between iron acquisition and iron-requiring processes, such as synthesis and/or repair of Fe-S clusters in biosynthetic enzymes. The sequence is that of Probable Fe(2+)-trafficking protein from Sodalis glossinidius (strain morsitans).